The sequence spans 72 residues: Translation initiation factor IF-1 (72 aa).

The S1-like domain occupies 1-72; sequence MSKEEAIEVE…SRGRITYRAK (72 aa).

It belongs to the IF-1 family. In terms of assembly, component of the 30S ribosomal translation pre-initiation complex which assembles on the 30S ribosome in the order IF-2 and IF-3, IF-1 and N-formylmethionyl-tRNA(fMet); mRNA recruitment can occur at any time during PIC assembly.

The protein resides in the cytoplasm. One of the essential components for the initiation of protein synthesis. Stabilizes the binding of IF-2 and IF-3 on the 30S subunit to which N-formylmethionyl-tRNA(fMet) subsequently binds. Helps modulate mRNA selection, yielding the 30S pre-initiation complex (PIC). Upon addition of the 50S ribosomal subunit IF-1, IF-2 and IF-3 are released leaving the mature 70S translation initiation complex. The sequence is that of Translation initiation factor IF-1 from Geobacter metallireducens (strain ATCC 53774 / DSM 7210 / GS-15).